Reading from the N-terminus, the 275-residue chain is Hydroxyethylthiazole kinase (275 aa).

Residue methionine 50 participates in substrate binding. 2 residues coordinate ATP: arginine 126 and serine 171. Residue alanine 200 coordinates substrate.

This sequence belongs to the Thz kinase family. The cofactor is Mg(2+).

It carries out the reaction 5-(2-hydroxyethyl)-4-methylthiazole + ATP = 4-methyl-5-(2-phosphooxyethyl)-thiazole + ADP + H(+). Its pathway is cofactor biosynthesis; thiamine diphosphate biosynthesis; 4-methyl-5-(2-phosphoethyl)-thiazole from 5-(2-hydroxyethyl)-4-methylthiazole: step 1/1. In terms of biological role, catalyzes the phosphorylation of the hydroxyl group of 4-methyl-5-beta-hydroxyethylthiazole (THZ). The polypeptide is Hydroxyethylthiazole kinase (Acinetobacter baumannii (strain ATCC 17978 / DSM 105126 / CIP 53.77 / LMG 1025 / NCDC KC755 / 5377)).